The following is a 204-amino-acid chain: Small ribosomal subunit protein uS4 (204 aa).

The tract at residues 20–46 is disordered; that stretch reads WGRPKSPINKREYGPGEHGQRRRKPSD. Residues 28–38 show a composition bias toward basic and acidic residues; it reads NKREYGPGEHG. The S4 RNA-binding domain occupies 93-156; the sequence is TRLDAVVYRM…RQMPLILEAL (64 aa).

Belongs to the universal ribosomal protein uS4 family. As to quaternary structure, part of the 30S ribosomal subunit. Contacts protein S5. The interaction surface between S4 and S5 is involved in control of translational fidelity.

In terms of biological role, one of the primary rRNA binding proteins, it binds directly to 16S rRNA where it nucleates assembly of the body of the 30S subunit. Functionally, with S5 and S12 plays an important role in translational accuracy. The protein is Small ribosomal subunit protein uS4 of Rhodospirillum rubrum (strain ATCC 11170 / ATH 1.1.1 / DSM 467 / LMG 4362 / NCIMB 8255 / S1).